We begin with the raw amino-acid sequence, 325 residues long: Mitochondrial citrate transporter C (325 aa).

3 Solcar repeats span residues 15–105, 117–208, and 221–310; these read ASPA…YKQM, KATF…LKAF, and LPSY…LKGK. 6 helical membrane-spanning segments follow: residues 21–41, 82–102, 121–141, 187–207, 221–241, and 282–303; these read LIAG…LDTI, GAVL…YESY, LAGL…MEVV, TALR…ELKA, LPSY…PFSN, and FYKG…TFTV.

The protein belongs to the mitochondrial carrier (TC 2.A.29) family.

It localises to the mitochondrion inner membrane. In terms of biological role, mitochondrial transporter that does not mediate citrate export from mitochondria to cytoplasm. Its exact function has still to be determined. This is Mitochondrial citrate transporter C from Aspergillus niger (strain ATCC 1015 / CBS 113.46 / FGSC A1144 / LSHB Ac4 / NCTC 3858a / NRRL 328 / USDA 3528.7).